Here is a 200-residue protein sequence, read N- to C-terminus: Adenylate kinase (200 aa).

10–15 serves as a coordination point for ATP; the sequence is GAGKGT. Positions 30–59 are NMP; the sequence is STGDMLRAAVAAGTPVGLEAKAVMESGGLV. AMP contacts are provided by residues threonine 31, arginine 36, 57-59, 85-88, and glutamine 92; these read GLV and GFPR. An LID region spans residues 126–142; that stretch reads KRAAETLARGQAVRKDD. Arginine 127 lines the ATP pocket. Positions 139 and 150 each coordinate AMP. Glutamine 178 is a binding site for ATP.

Belongs to the adenylate kinase family. Monomer.

It is found in the cytoplasm. It carries out the reaction AMP + ATP = 2 ADP. Its pathway is purine metabolism; AMP biosynthesis via salvage pathway; AMP from ADP: step 1/1. Functionally, catalyzes the reversible transfer of the terminal phosphate group between ATP and AMP. Plays an important role in cellular energy homeostasis and in adenine nucleotide metabolism. This Methylobacterium radiotolerans (strain ATCC 27329 / DSM 1819 / JCM 2831 / NBRC 15690 / NCIMB 10815 / 0-1) protein is Adenylate kinase.